The sequence spans 387 residues: MTVTLNLSRPNSALPGKKRLTGLSVPALKAEMEALGLEPKAANMRARQIRRWIHHFGTTDFAAMTDIAKDLRAQLAEKFEVERPEIADHQVSRDGTQKWLTRYGPGIEGESVYIPDVGKAGALCVSSQVGCTLNCTFCHTGTQALVRNLTAAEIVQQVIIARDALSEWPSSIEERRLTNIVFMGMGEPLYNLDNVAEAIDTISDGDGMAIGRRRITVSTAGVAPKIPELGERTGAMLAISLHATNNDLRNELVPLNRKYDIQTLFDAIRAYPGLGNAKRVTFEYVMLKGINDTLAEARDLVKLMKGVPSKINLIPFNPWPGSPYECSDWETIEEFAEVLNRAGYASPIRTPRGRDILAACGQLRSESVKVRASELRKQQASAEGAES.

The active-site Proton acceptor is the E110. One can recognise a Radical SAM core domain in the interval 117–349; it reads VGKAGALCVS…NRAGYASPIR (233 aa). A disulfide bond links C124 and C360. Residues C131, C135, and C138 each contribute to the [4Fe-4S] cluster site. S-adenosyl-L-methionine-binding positions include 186–187, S218, 240–242, and N317; these read GE and SLH. The active-site S-methylcysteine intermediate is C360.

Belongs to the radical SAM superfamily. RlmN family. [4Fe-4S] cluster is required as a cofactor.

It is found in the cytoplasm. It catalyses the reaction adenosine(2503) in 23S rRNA + 2 reduced [2Fe-2S]-[ferredoxin] + 2 S-adenosyl-L-methionine = 2-methyladenosine(2503) in 23S rRNA + 5'-deoxyadenosine + L-methionine + 2 oxidized [2Fe-2S]-[ferredoxin] + S-adenosyl-L-homocysteine. It carries out the reaction adenosine(37) in tRNA + 2 reduced [2Fe-2S]-[ferredoxin] + 2 S-adenosyl-L-methionine = 2-methyladenosine(37) in tRNA + 5'-deoxyadenosine + L-methionine + 2 oxidized [2Fe-2S]-[ferredoxin] + S-adenosyl-L-homocysteine. In terms of biological role, specifically methylates position 2 of adenine 2503 in 23S rRNA and position 2 of adenine 37 in tRNAs. m2A2503 modification seems to play a crucial role in the proofreading step occurring at the peptidyl transferase center and thus would serve to optimize ribosomal fidelity. This is Dual-specificity RNA methyltransferase RlmN from Hyphomonas neptunium (strain ATCC 15444).